Consider the following 299-residue polypeptide: Probable alpha-L-glutamate ligase (299 aa).

In terms of domain architecture, ATP-grasp spans 112 to 294 (LQLLTEQGIA…IALQMIVHIE (183 aa)). Residues K148, 185–186 (DF), D194, and 218–220 (RAN) contribute to the ATP site. 3 residues coordinate Mg(2+): D255, E267, and N269. Positions 255, 267, and 269 each coordinate Mn(2+).

The protein belongs to the RimK family. The cofactor is Mg(2+). Mn(2+) is required as a cofactor.

The sequence is that of Probable alpha-L-glutamate ligase from Histophilus somni (strain 129Pt) (Haemophilus somnus).